We begin with the raw amino-acid sequence, 323 residues long: Acetyl-coenzyme A carboxylase carboxyl transferase subunit alpha (323 aa).

One can recognise a CoA carboxyltransferase C-terminal domain in the interval 39 to 293; that stretch reads RLSKKSQQLT…RRALADSLRQ (255 aa).

It belongs to the AccA family. Acetyl-CoA carboxylase is a heterohexamer composed of biotin carboxyl carrier protein (AccB), biotin carboxylase (AccC) and two subunits each of ACCase subunit alpha (AccA) and ACCase subunit beta (AccD).

Its subcellular location is the cytoplasm. The catalysed reaction is N(6)-carboxybiotinyl-L-lysyl-[protein] + acetyl-CoA = N(6)-biotinyl-L-lysyl-[protein] + malonyl-CoA. Its pathway is lipid metabolism; malonyl-CoA biosynthesis; malonyl-CoA from acetyl-CoA: step 1/1. Component of the acetyl coenzyme A carboxylase (ACC) complex. First, biotin carboxylase catalyzes the carboxylation of biotin on its carrier protein (BCCP) and then the CO(2) group is transferred by the carboxyltransferase to acetyl-CoA to form malonyl-CoA. This is Acetyl-coenzyme A carboxylase carboxyl transferase subunit alpha from Paraburkholderia phytofirmans (strain DSM 17436 / LMG 22146 / PsJN) (Burkholderia phytofirmans).